The primary structure comprises 201 residues: Recombination protein RecR (201 aa).

Residues 60–75 (CSVCGNVDTSDPCTIC) form a C4-type zinc finger. In terms of domain architecture, Toprim spans 83–178 (ATLIVVEDVS…RVTKLAHGVP (96 aa)).

It belongs to the RecR family.

May play a role in DNA repair. It seems to be involved in an RecBC-independent recombinational process of DNA repair. It may act with RecF and RecO. This chain is Recombination protein RecR, found in Chelativorans sp. (strain BNC1).